A 208-amino-acid polypeptide reads, in one-letter code: Small ribosomal subunit protein uS5 (208 aa).

The span at 1 to 21 (MSDREQRDGGRSAENNNDRKG) shows a compositional bias: basic and acidic residues. The segment at 1 to 38 (MSDREQRDGGRSAENNNDRKGRNNGRRNDRRNHQDNER) is disordered. The 64-residue stretch at 41–104 (YIERVVTINR…EEARKNFFRV (64 aa)) folds into the S5 DRBM domain.

This sequence belongs to the universal ribosomal protein uS5 family. In terms of assembly, part of the 30S ribosomal subunit. Contacts proteins S4 and S8.

With S4 and S12 plays an important role in translational accuracy. Functionally, located at the back of the 30S subunit body where it stabilizes the conformation of the head with respect to the body. The protein is Small ribosomal subunit protein uS5 of Corynebacterium aurimucosum (strain ATCC 700975 / DSM 44827 / CIP 107346 / CN-1) (Corynebacterium nigricans).